The chain runs to 105 residues: Flagellar transcriptional regulator FlhD (105 aa).

Belongs to the FlhD family. In terms of assembly, homodimer; disulfide-linked. Forms a heterohexamer composed of two FlhC and four FlhD subunits. Each FlhC binds a FlhD dimer, forming a heterotrimer, and a hexamer assembles by dimerization of two heterotrimers.

It localises to the cytoplasm. Its function is as follows. Functions in complex with FlhC as a master transcriptional regulator that regulates transcription of several flagellar and non-flagellar operons by binding to their promoter region. Activates expression of class 2 flagellar genes, including fliA, which is a flagellum-specific sigma factor that turns on the class 3 genes. Also regulates genes whose products function in a variety of physiological pathways. This Nitrosomonas europaea (strain ATCC 19718 / CIP 103999 / KCTC 2705 / NBRC 14298) protein is Flagellar transcriptional regulator FlhD.